Here is a 242-residue protein sequence, read N- to C-terminus: Carboxy-S-adenosyl-L-methionine synthase (242 aa).

Residues Tyr-39, Gly-64–Ser-66, Asp-89–Asn-90, Asp-117–Ile-118, Asn-132, and Arg-199 contribute to the S-adenosyl-L-methionine site.

The protein belongs to the class I-like SAM-binding methyltransferase superfamily. Cx-SAM synthase family. As to quaternary structure, homodimer.

The enzyme catalyses prephenate + S-adenosyl-L-methionine = carboxy-S-adenosyl-L-methionine + 3-phenylpyruvate + H2O. In terms of biological role, catalyzes the conversion of S-adenosyl-L-methionine (SAM) to carboxy-S-adenosyl-L-methionine (Cx-SAM). This chain is Carboxy-S-adenosyl-L-methionine synthase, found in Aliivibrio fischeri (strain MJ11) (Vibrio fischeri).